The primary structure comprises 358 residues: Insulin gene enhancer protein ISL-2A (358 aa).

2 consecutive LIM zinc-binding domains span residues 27–80 (CVGC…CKRD) and 89–143 (CANC…RADH). The segment at residues 190–249 (TTRVRTVLNEKQLHTLRTCYNANPRPDALMKEQLVEMTGLSPRVIRVWFQNKRCKDKKRS) is a DNA-binding region (homeobox). A compositionally biased stretch (low complexity) spans 325 to 335 (ESGSMGNSSGS). The disordered stretch occupies residues 325 to 358 (ESGSMGNSSGSDVTSLSSQLPDTPNSMVASPVDT). Residues 336 to 358 (DVTSLSSQLPDTPNSMVASPVDT) show a composition bias toward polar residues.

The protein localises to the nucleus. Its function is as follows. Binds to one of the cis-acting domain of the insulin gene enhancer. May be involved in subtype specialization of primary motoneurons. The chain is Insulin gene enhancer protein ISL-2A (isl2a) from Oncorhynchus tshawytscha (Chinook salmon).